A 64-amino-acid polypeptide reads, in one-letter code: Large ribosomal subunit protein bL35 (64 aa).

This sequence belongs to the bacterial ribosomal protein bL35 family.

This chain is Large ribosomal subunit protein bL35, found in Vibrio vulnificus (strain CMCP6).